The sequence spans 329 residues: 4-hydroxythreonine-4-phosphate dehydrogenase (329 aa).

Substrate contacts are provided by H136 and T137. Residues H166, H211, and H266 each contribute to the a divalent metal cation site. Substrate contacts are provided by K274, N283, and R292.

Belongs to the PdxA family. As to quaternary structure, homodimer. The cofactor is Zn(2+). Requires Mg(2+) as cofactor. It depends on Co(2+) as a cofactor.

The protein resides in the cytoplasm. The enzyme catalyses 4-(phosphooxy)-L-threonine + NAD(+) = 3-amino-2-oxopropyl phosphate + CO2 + NADH. It functions in the pathway cofactor biosynthesis; pyridoxine 5'-phosphate biosynthesis; pyridoxine 5'-phosphate from D-erythrose 4-phosphate: step 4/5. In terms of biological role, catalyzes the NAD(P)-dependent oxidation of 4-(phosphooxy)-L-threonine (HTP) into 2-amino-3-oxo-4-(phosphooxy)butyric acid which spontaneously decarboxylates to form 3-amino-2-oxopropyl phosphate (AHAP). The sequence is that of 4-hydroxythreonine-4-phosphate dehydrogenase from Escherichia coli (strain SE11).